A 470-amino-acid polypeptide reads, in one-letter code: Argininosuccinate lyase (470 aa).

The protein belongs to the lyase 1 family. Argininosuccinate lyase subfamily.

Its subcellular location is the cytoplasm. The enzyme catalyses 2-(N(omega)-L-arginino)succinate = fumarate + L-arginine. Its pathway is amino-acid biosynthesis; L-arginine biosynthesis; L-arginine from L-ornithine and carbamoyl phosphate: step 3/3. In Mycobacterium tuberculosis (strain CDC 1551 / Oshkosh), this protein is Argininosuccinate lyase.